We begin with the raw amino-acid sequence, 172 residues long: RNA pyrophosphohydrolase (172 aa).

A Nudix hydrolase domain is found at 6-149 (GYRLNVGIVI…KRDVYRRAMK (144 aa)). The Nudix box signature appears at 38–59 (GGIDEGETPEQAMYRELYEEVG).

Belongs to the Nudix hydrolase family. RppH subfamily. The cofactor is a divalent metal cation.

Functionally, accelerates the degradation of transcripts by removing pyrophosphate from the 5'-end of triphosphorylated RNA, leading to a more labile monophosphorylated state that can stimulate subsequent ribonuclease cleavage. The polypeptide is RNA pyrophosphohydrolase (Vibrio atlanticus (strain LGP32) (Vibrio splendidus (strain Mel32))).